The primary structure comprises 398 residues: MKIDPVELTRKLISFESITPEDSGAIEYIATIFKKSGFDCEILEFGDKVKNLYAKYINGVPNLCFAGHVDVVPPGQLKDWAFGPFKPEVRDGMLYGRGAADMKSGVAAFIAAMVNLIAEKFQFNGSISALITSAEESMEEYGTKAVLEWMKNKQKKIDFCVVGEPTSSEKLGDTIKIGRRGSVTFELICHGKQGHVAYPDLADNPIYKVISILSKVKNTTFDHGNKYFQPSHCEVTTIDVGNNTSNLIPGSATTRFNIRYNNEQTPGGLYKLIDEICSSVTNDYKLSMHSSRDVFLSTPDRNTDIMLDAISKVTNIDAILSTSGGTSDAAFIKDVCPVIEFGIINKTAHQINECVSVNDIHKLTAIYKEFIENYFNPTNKILNQVNVVSNISSGPLLA.

H68 is a Zn(2+) binding site. The active site involves D70. Position 101 (D101) interacts with Zn(2+). E135 functions as the Proton acceptor in the catalytic mechanism. Positions 136, 164, and 349 each coordinate Zn(2+).

Belongs to the peptidase M20A family. DapE subfamily. As to quaternary structure, homodimer. The cofactor is Zn(2+). Co(2+) serves as cofactor.

It carries out the reaction N-succinyl-(2S,6S)-2,6-diaminopimelate + H2O = (2S,6S)-2,6-diaminopimelate + succinate. It functions in the pathway amino-acid biosynthesis; L-lysine biosynthesis via DAP pathway; LL-2,6-diaminopimelate from (S)-tetrahydrodipicolinate (succinylase route): step 3/3. Its function is as follows. Catalyzes the hydrolysis of N-succinyl-L,L-diaminopimelic acid (SDAP), forming succinate and LL-2,6-diaminopimelate (DAP), an intermediate involved in the bacterial biosynthesis of lysine and meso-diaminopimelic acid, an essential component of bacterial cell walls. In Wolbachia pipientis wMel, this protein is Succinyl-diaminopimelate desuccinylase.